The sequence spans 350 residues: dTDP-D-glucose 4,6-dehydratase (350 aa).

Residue Thr-142 coordinates substrate. The Proton donor role is filled by Asp-143. Catalysis depends on proton acceptor residues Glu-144 and Tyr-166.

It belongs to the NAD(P)-dependent epimerase/dehydratase family. dTDP-glucose dehydratase subfamily. The cofactor is NAD(+).

The catalysed reaction is dTDP-alpha-D-glucose = dTDP-4-dehydro-6-deoxy-alpha-D-glucose + H2O. This is dTDP-D-glucose 4,6-dehydratase (TGDS) from Homo sapiens (Human).